A 118-amino-acid chain; its full sequence is Large ribosomal subunit protein bL20 (118 aa).

The protein belongs to the bacterial ribosomal protein bL20 family.

Its function is as follows. Binds directly to 23S ribosomal RNA and is necessary for the in vitro assembly process of the 50S ribosomal subunit. It is not involved in the protein synthesizing functions of that subunit. This chain is Large ribosomal subunit protein bL20, found in Fervidobacterium nodosum (strain ATCC 35602 / DSM 5306 / Rt17-B1).